The following is a 985-amino-acid chain: Exocyst complex component 4 (985 aa).

A coiled-coil region spans residues 36-70; the sequence is SETTEERQKEKQKIEAEFKRSDLRLNELVSRHDQQ. S235, S456, S459, S682, and S686 each carry phosphoserine. The segment at 434–480 is disordered; the sequence is DKSSHVGTSNNSDAFKEHRRNASDASVDDNLAGQLGGSGKGSTSGLF.

This sequence belongs to the SEC8 family. In terms of assembly, the exocyst complex is composed of Sec3/Exoc1, Sec5/Exoc2, Sec6/Exoc3, Sec8/Exoc4, Sec10/Exoc5, Sec15/Exoc6, exo70/Exoc7 and Exo84/Exoc8. As to expression, abundant in the embryonic and larval glutamatergic neuromuscular junctions (NMJs), pre and postsynaptically.

In terms of biological role, component of the exocyst complex involved in the docking of exocytic vesicles with fusion sites on the plasma membrane. Involved in regulation of synaptic microtubule formation, and also regulation of synaptic growth and glutamate receptor trafficking. Does not appear to be required for basal neurotransmission. The polypeptide is Exocyst complex component 4 (Drosophila melanogaster (Fruit fly)).